The following is a 316-amino-acid chain: MTKEFHHVTVLLHETIDMLDVKPEGIYVDATLGGAGHSEYLLSKLSEKGHLYAFDQDQNAIDNAQKRLAPYIEKGMVTFIKDNFRHLQARLREAGVQEIDGICYDLGVSSPQLDQRERGFSYKKDAPLDMRMNQDASLTAYEVVNHYDYHDLVRIFFKYGEDKFSKQIARKIEQAREVKPIETTTELAEIIKLVKPAKELKKKGHPAKQIFQAIRIEVNDELGAADESIQQAMDMLALDGRISVITFHSLEDRLTKQLFKEASTVEVPKGLPFIPDDLKPKMELVSRKPILPSAEELEANNRSHSAKLRVVRKIHK.

Residues 35-37 (AGH), aspartate 55, phenylalanine 84, aspartate 105, and glutamine 112 contribute to the S-adenosyl-L-methionine site.

Belongs to the methyltransferase superfamily. RsmH family.

It localises to the cytoplasm. The catalysed reaction is cytidine(1402) in 16S rRNA + S-adenosyl-L-methionine = N(4)-methylcytidine(1402) in 16S rRNA + S-adenosyl-L-homocysteine + H(+). Specifically methylates the N4 position of cytidine in position 1402 (C1402) of 16S rRNA. This is Ribosomal RNA small subunit methyltransferase H from Streptococcus pneumoniae (strain JJA).